We begin with the raw amino-acid sequence, 256 residues long: ATP synthase subunit a (256 aa).

A propeptide spans 1–8 (MYQFNFIL) (removed in mature form). The next 7 helical transmembrane spans lie at 34-54 (ITNI…YHLL), 92-112 (YFPF…IGMV), 121-141 (HFIL…FLGL), 148-168 (FFSL…LVLI), 186-206 (ANIL…YNIM), 209-229 (GILF…FSGL), and 230-250 (ELAI…SYIK).

It belongs to the ATPase A chain family. As to quaternary structure, F-type ATPases have 2 components, CF(1) - the catalytic core - and CF(0) - the membrane proton channel. CF(1) has five subunits: alpha(3), beta(3), gamma(1), delta(1), epsilon(1). CF(0) has three main subunits: a, b and c.

It localises to the mitochondrion inner membrane. Its function is as follows. Mitochondrial membrane ATP synthase (F(1)F(0) ATP synthase or Complex V) produces ATP from ADP in the presence of a proton gradient across the membrane which is generated by electron transport complexes of the respiratory chain. F-type ATPases consist of two structural domains, F(1) - containing the extramembraneous catalytic core and F(0) - containing the membrane proton channel, linked together by a central stalk and a peripheral stalk. During catalysis, ATP synthesis in the catalytic domain of F(1) is coupled via a rotary mechanism of the central stalk subunits to proton translocation. Key component of the proton channel; it may play a direct role in the translocation of protons across the membrane. The polypeptide is ATP synthase subunit a (atp6) (Emericella nidulans (Aspergillus nidulans)).